The chain runs to 226 residues: Small ribosomal subunit protein uS3 (226 aa).

One can recognise a KH type-2 domain in the interval 39 to 109 (IYKFFDKFTR…KLDVNLKVLT (71 aa)).

The protein belongs to the universal ribosomal protein uS3 family. As to quaternary structure, part of the 30S ribosomal subunit. Forms a tight complex with proteins S10 and S14.

Functionally, binds the lower part of the 30S subunit head. Binds mRNA in the 70S ribosome, positioning it for translation. This chain is Small ribosomal subunit protein uS3, found in Mycoplasmopsis synoviae (strain 53) (Mycoplasma synoviae).